Consider the following 45-residue polypeptide: MKFFSVVTVFVFGLLALANAVPLSPDPGNVVINGDCKYCNVHGGK.

Residues 1–20 (MKFFSVVTVFVFGLLALANA) form the signal peptide. A propeptide spans 21-27 (VPLSPDP) (removed by a dipeptidylpeptidase). A disulfide bond links C36 and C39. G43 bears the Glycine amide mark.

As to expression, hemolymph (at protein level).

It localises to the secreted. In terms of biological role, secreted immune-induced peptide induced by Toll signaling. Has a role in resistance to bacterial and fungal infections. The protein is Bomanin Short 2 of Drosophila melanogaster (Fruit fly).